The following is a 124-amino-acid chain: Small ribosomal subunit protein bS6 (124 aa).

This sequence belongs to the bacterial ribosomal protein bS6 family.

Functionally, binds together with bS18 to 16S ribosomal RNA. In Bordetella avium (strain 197N), this protein is Small ribosomal subunit protein bS6.